Reading from the N-terminus, the 79-residue chain is MEETGAVFRKELVSKLLHLHFKDKKTKVSGDALQLVAELLKIFVVEAAIRSVRQAQAEGLAHVDVEQLEKVLPQLLLDF.

M1 is modified (N-acetylmethionine).

The protein belongs to the CENP-X/MHF2 family. Heterodimer with CENPX, sometimes called MHF; this interaction stabilizes both partners. MHF heterodimers can assemble to form tetrameric structures. MHF also coassemble with CENPT-CENPW heterodimers at centromeres to form the tetrameric CENP-T-W-S-X complex. Forms a discrete complex with FANCM and CENPX, called FANCM-MHF; this interaction, probably mediated by direct binding between CENPS and FANCM, leads to synergistic activation of double-stranded DNA binding and strongly stimulates FANCM-mediated DNA remodeling. Recruited by FANCM to the Fanconi anemia (FA) core complex, which consists of CENPS, CENPX, FANCA, FANCB, FANCC, FANCE, FANCF, FANCG, FANCL, FANCM, FAAP24 and FAAP100. The FA core complex associates with Bloom syndrome (BLM) complex, which consists of at least BLM, DNA topoisomerase 3-alpha (TOP3A), RMI1/BLAP75, RPA1/RPA70 and RPA2/RPA32. The super complex between FA and BLM is called BRAFT.

Its subcellular location is the nucleus. The protein localises to the chromosome. It localises to the centromere. The protein resides in the kinetochore. Its function is as follows. DNA-binding component of the Fanconi anemia (FA) core complex. Required for the normal activation of the FA pathway, leading to monoubiquitination of the FANCI-FANCD2 complex in response to DNA damage, cellular resistance to DNA cross-linking drugs, and prevention of chromosomal breakage. In complex with CENPS (MHF heterodimer), crucial cofactor for FANCM in both binding and ATP-dependent remodeling of DNA. Stabilizes FANCM. In complex with CENPS and FANCM (but not other FANC proteins), rapidly recruited to blocked forks and promotes gene conversion at blocked replication forks. In complex with CENPS, CENPT and CENPW (CENP-T-W-S-X heterotetramer), involved in the formation of a functional kinetochore outer plate, which is essential for kinetochore-microtubule attachment and faithful mitotic progression. As a component of MHF and CENP-T-W-S-X complexes, binds DNA and bends it to form a nucleosome-like structure. DNA-binding function is fulfilled in the presence of CENPS, with the following preference for DNA substates: Holliday junction &gt; double-stranded &gt; splay arm &gt; single-stranded. Does not bind DNA on its own. In Bos taurus (Bovine), this protein is Centromere protein X (CENPX).